The following is a 309-amino-acid chain: tRNA dimethylallyltransferase (309 aa).

Residue Gly-10 to Thr-17 coordinates ATP. Residue Thr-12–Thr-17 participates in substrate binding. The tract at residues Asp-35 to Gln-38 is interaction with substrate tRNA.

The protein belongs to the IPP transferase family. In terms of assembly, monomer. The cofactor is Mg(2+).

It carries out the reaction adenosine(37) in tRNA + dimethylallyl diphosphate = N(6)-dimethylallyladenosine(37) in tRNA + diphosphate. Functionally, catalyzes the transfer of a dimethylallyl group onto the adenine at position 37 in tRNAs that read codons beginning with uridine, leading to the formation of N6-(dimethylallyl)adenosine (i(6)A). In Clostridium beijerinckii (strain ATCC 51743 / NCIMB 8052) (Clostridium acetobutylicum), this protein is tRNA dimethylallyltransferase.